Consider the following 145-residue polypeptide: MLTAEEKAAVTGFWGKVKVDEVGAEALGRLLVVYPWTQRFFEHFGDLSSADAVMNNAKVKAHGKKVLBSFSNGMKHLDDLKGTFAQLSELHCDKLHVBPZBFRXXXXXXXXXXXXHHGSEFTPVLQAZFQKVVAGVANALAHRYH.

A Globin domain is found at 1 to 145 (MLTAEEKAAV…VANALAHRYH (145 aa)). A Phosphothreonine modification is found at Thr-11. Lys-58 carries the N6-acetyllysine modification. His-62 contacts heme b. Lys-81 carries the N6-acetyllysine modification. His-91 contributes to the heme b binding site. Position 92 is an S-nitrosocysteine (Cys-92).

This sequence belongs to the globin family. In terms of assembly, heterotetramer of two alpha chains and two beta chains. Red blood cells.

Its function is as follows. Involved in oxygen transport from the lung to the various peripheral tissues. This chain is Hemoglobin subunit beta (HBB), found in Ovis aries musimon (Mouflon).